The chain runs to 336 residues: HTH-type transcriptional regulator AscG (336 aa).

The 55-residue stretch at 2 to 56 folds into the HTH lacI-type domain; that stretch reads TTMLEVAKRAGVSKATVSRVLSGNGYVSQETKDRVFQAVEESGYRPNLLARNLSA. The H-T-H motif DNA-binding region spans 4 to 23; that stretch reads MLEVAKRAGVSKATVSRVLS.

In terms of biological role, repressor of the asc operon. The cryptic operon is activated by the insertion of IS186 into the ascG gene. This Escherichia coli (strain K12) protein is HTH-type transcriptional regulator AscG (ascG).